We begin with the raw amino-acid sequence, 661 residues long: Protein WHI3 (661 aa).

Residues 14–31 (ASSSDNVVSSTTNTHNIS) are compositionally biased toward low complexity. A disordered region spans residues 14 to 58 (ASSSDNVVSSTTNTHNISPSHRSSLNLNTTSHPHEASGRGSASGE). Positions 32–44 (PSHRSSLNLNTTS) are enriched in polar residues. Serine 231 is subject to Phosphoserine. 3 stretches are compositionally biased toward low complexity: residues 237–272 (DPFS…SPQQ), 383–409 (NTSA…SASS), and 496–508 (KNNS…SNIT). Disordered regions lie at residues 237 to 280 (DPFS…QVNS), 383 to 410 (NTSA…ASSQ), 469 to 508 (EHMY…SNIT), and 613 to 661 (SSKG…HIKN). The 88-residue stretch at 538 to 625 (NTLYVGNLPS…GGIRLSFSKN (88 aa)) folds into the RRM domain. Residues 628-647 (GVRGPNSRRGGSGNPNPNVN) show a composition bias toward low complexity. The segment covering 648 to 661 (MLSSYNSNVGHIKN) has biased composition (polar residues).

Functionally, involved in size control and cell cycle. The sequence is that of Protein WHI3 (WHI3) from Saccharomyces cerevisiae (strain ATCC 204508 / S288c) (Baker's yeast).